A 190-amino-acid chain; its full sequence is MANLRTQKRLAASVIGVGKRKVWLDPNETTEIANANSRSAIRKLYKNGTIVKKPETVHSRSRARALKESKRAGRHMGYGKRKGTKDARMPSQVLWMRRLRVLRKLLAKYRDAGKIDKHLYHNLYKAAKGNTFKHKRSLVEHIIAAKAEALREKALKEEAEARRVRNRAARERRQQRLAEKKEALFAEAAN.

Disordered regions lie at residues 56–85 and 166–190; these read TVHS…KGTK and NRAA…EAAN. Over residues 72–83 the composition is skewed to basic residues; sequence AGRHMGYGKRKG. Residues 166–184 show a composition bias toward basic and acidic residues; sequence NRAARERRQQRLAEKKEAL.

Belongs to the eukaryotic ribosomal protein eL19 family. In terms of assembly, component of the large ribosomal subunit. Mature ribosomes consist of a small (40S) and a large (60S) subunit. The 40S subunit contains about 32 different proteins and 1 molecule of RNA (18S). The 60S subunit contains 45 different proteins and 3 molecules of RNA (25S, 5.8S and 5S).

It is found in the cytoplasm. In terms of biological role, component of the ribosome, a large ribonucleoprotein complex responsible for the synthesis of proteins in the cell. The small ribosomal subunit (SSU) binds messenger RNAs (mRNAs) and translates the encoded message by selecting cognate aminoacyl-transfer RNA (tRNA) molecules. The large subunit (LSU) contains the ribosomal catalytic site termed the peptidyl transferase center (PTC), which catalyzes the formation of peptide bonds, thereby polymerizing the amino acids delivered by tRNAs into a polypeptide chain. The nascent polypeptides leave the ribosome through a tunnel in the LSU and interact with protein factors that function in enzymatic processing, targeting, and the membrane insertion of nascent chains at the exit of the ribosomal tunnel. RPL19A may play a role in the last stages of translation initiation, in particular subunit joining and shedding/releasing factors. The sequence is that of Large ribosomal subunit protein eL19 from Candida albicans (strain SC5314 / ATCC MYA-2876) (Yeast).